The following is a 171-amino-acid chain: Secretion monitor (171 aa).

The signal sequence occupies residues M1–G30.

This sequence belongs to the SecM family.

The protein resides in the cytoplasm. The protein localises to the cytosol. It is found in the periplasm. Its function is as follows. Regulates secA expression by translational coupling of the secM secA operon. Translational pausing at a specific Pro residue 5 residues before the end of the protein may allow disruption of a mRNA repressor helix that normally suppresses secA translation initiation. This Pectobacterium atrosepticum (strain SCRI 1043 / ATCC BAA-672) (Erwinia carotovora subsp. atroseptica) protein is Secretion monitor.